The primary structure comprises 1392 residues: Leucine-rich PPR motif-containing protein, mitochondrial (1392 aa).

Residues 1-77 (MSALLRPARW…LPEEPAPVRR (77 aa)) constitute a mitochondrion transit peptide. 14 PPR repeats span residues 125–159 (LLRSCGSLLPELSLAERTEFAHKIWDKLQQLGTVY), 160–194 (DVSHYNALLKVYLQNEYRFSPTDFLAKMEGANIQP), 195–229 (NRVTYQRLIAAYCSVGDIEGASKILGFMKTRDLPI), 230–264 (TEAVFSALVTGHARAGDMESAENILTVMKQAGIEP), 265–299 (GPDTYLALLNAHAEKGDIDHVKQILEKVEKSDHYF), 300–334 (MDRDFLQIIVSFSKAGYPQYVSEILEKITYERRSI), 402–436 (HSSSLQFTLHCALQANKTALAKAVMEALRDEGFPI), 437–471 (RTHYFWPLLVGHQKTKNVQGIIDILKIMKEMGVDP), 677–708 (VGDPLKQLILLLCSEENMQKALEVKAKYESDM), 709–745 (VIGGYAALINLCCRHDNAEDALNLKQEFDRLDPSAVL), 746–783 (DTAKYVALVKVLGKHGRVQDAINILKEMKEKDVVIKDA), 784–820 (AVLSFFHILNGAALRGEIETVKQLHEAIVTLGLAKPS), 821–856 (SNISFPLVTVHLEKDDLPAALEASIACHEKYKVLPR), and 953–987 (RDQMYYNLLKLYKISGDWQRADAVWNKMQEENLIP). Residues lysine 151 and lysine 186 each carry the N6-acetyllysine modification. Position 291 is an N6-acetyllysine (lysine 291). Lysine 462 bears the N6-acetyllysine mark. Lysine 749 bears the N6-acetyllysine mark. 3 positions are modified to phosphoserine: serine 1025, serine 1026, and serine 1028. 6 PPR repeats span residues 1030–1064 (GDTVTEKMLLSDCRLKKSKDAYNIFLKAEKQDVVF), 1065–1101 (SSEAYSTLVGLLLSKDDFTRAMHVKDFAETHIKGFTL), 1102–1136 (NGAASSLLIIAQVRRDYLKVALETLKAALDLEQVP), 1137–1173 (SELAVTRLIQALALQGDVKSIETIQKMVKGLDAIELS), 1174–1208 (RMVFINNIALAQMKNNEIDAAIENIEHMLASENQT), and 1315–1349 (NDRVYSCSMKSYVADKDVASAKALYEHLTAKNMKL). Serine 1137 carries the phosphoserine modification.

In terms of assembly, component of mRNP complexes associated with HNRPA1. Component of the complex, at least composed of LRPPRC, BECN1 and BCL2; the interactions prevent BECN1 from forming an autophagy-inducing complex with PIK3C3. Interacts with CECR2, HEBP2, MAP1S, UXT, PPARGC1A and FOXO1. Interacts (via N-terminus) with EIF4E; the interaction promotes association of EIF4E with 4ESE-containing mRNAs. Interacts with exportin XPO1/CRM1; interacts both alone and in complex with EIF4E and 4ESE-containing mRNAs to form an EIF4E-dependent mRNA export complex. Interacts with importin IPO8; the interaction occurs when LRPPRC is in its RNA-free form and returns LRPPRC to the nucleus for further export rounds. Interacts with BECN1. As to expression, widely expressed. Expressed in liver, brain and a subset of small diameter sensory neurons in the dorsal root ganglion (at protein level).

It localises to the mitochondrion. Its subcellular location is the nucleus. The protein resides in the nucleoplasm. The protein localises to the nucleus inner membrane. It is found in the nucleus outer membrane. Functionally, may play a role in RNA metabolism in both nuclei and mitochondria. In the nucleus binds to HNRPA1-associated poly(A) mRNAs and is part of nmRNP complexes at late stages of mRNA maturation which are possibly associated with nuclear mRNA export. Positively modulates nuclear export of mRNAs containing the EIF4E sensitivity element (4ESE) by binding simultaneously to both EIF4E and the 4ESE and acting as a platform for assembly for the RNA export complex. Also binds to exportin XPO1/CRM1 to engage the nuclear pore and traffic the bound mRNAs to the cytoplasm. May bind mature mRNA in the nucleus outer membrane. In mitochondria binds to poly(A) mRNA. Plays a role in translation or stability of mitochondrially encoded cytochrome c oxidase (COX) subunits. May be involved in transcription regulation. Cooperates with PPARGC1A to regulate certain mitochondrially encoded genes and gluconeogenic genes and may regulate docking of PPARGC1A to transcription factors. Seems to be involved in the transcription regulation of the multidrug-related genes MDR1 and MVP. Part of a nuclear factor that binds to the invMED1 element of MDR1 and MVP gene promoters. Binds single-stranded DNA. Required for maintaining mitochondrial potential. Suppresses the initiation of basal levels of autophagy and mitophagy by sustaining BCL2 levels. The sequence is that of Leucine-rich PPR motif-containing protein, mitochondrial (Lrpprc) from Rattus norvegicus (Rat).